We begin with the raw amino-acid sequence, 601 residues long: Phosphomethylpyrimidine synthase (601 aa).

2 disordered regions span residues 1-31 and 100-141; these read MTNK…GKSI and AGRP…RDGQ. Basic and acidic residues predominate over residues 100-112; it reads AGRPVRPEDDGIK. Substrate contacts are provided by residues N208, M237, Y266, H302, 322–324, 363–366, and E402; these read SRG and DGLR. Residue H406 coordinates Zn(2+). Y429 contributes to the substrate binding site. H470 is a binding site for Zn(2+). C550, C553, and C558 together coordinate [4Fe-4S] cluster.

Belongs to the ThiC family. It depends on [4Fe-4S] cluster as a cofactor.

The enzyme catalyses 5-amino-1-(5-phospho-beta-D-ribosyl)imidazole + S-adenosyl-L-methionine = 4-amino-2-methyl-5-(phosphooxymethyl)pyrimidine + CO + 5'-deoxyadenosine + formate + L-methionine + 3 H(+). It functions in the pathway cofactor biosynthesis; thiamine diphosphate biosynthesis. In terms of biological role, catalyzes the synthesis of the hydroxymethylpyrimidine phosphate (HMP-P) moiety of thiamine from aminoimidazole ribotide (AIR) in a radical S-adenosyl-L-methionine (SAM)-dependent reaction. This is Phosphomethylpyrimidine synthase from Streptomyces avermitilis (strain ATCC 31267 / DSM 46492 / JCM 5070 / NBRC 14893 / NCIMB 12804 / NRRL 8165 / MA-4680).